The sequence spans 387 residues: Alkanesulfonate monooxygenase (387 aa).

The protein belongs to the SsuD family.

The catalysed reaction is an alkanesulfonate + FMNH2 + O2 = an aldehyde + FMN + sulfite + H2O + 2 H(+). Its function is as follows. Catalyzes the desulfonation of aliphatic sulfonates. The polypeptide is Alkanesulfonate monooxygenase (Ralstonia nicotianae (strain ATCC BAA-1114 / GMI1000) (Ralstonia solanacearum)).